The following is a 269-amino-acid chain: Protein RKD1 (269 aa).

The RWP-RK domain occupies 106-195 (TTTTKKRRCR…EKMEGEENED (90 aa)). Residues 175 to 216 (LQKLISNVKELEKMEGEENEDKLRNALEKLEKEKKTIEKLPD) are a coiled coil. Residues 230-269 (CFKANHKRKRRSGMSTPITSSSSSASASSSSYSSVSGFER) are disordered. Over residues 249-269 (SSSSSASASSSSYSSVSGFER) the composition is skewed to low complexity.

It is found in the nucleus. Putative transcription factor. The polypeptide is Protein RKD1 (RKD1) (Arabidopsis thaliana (Mouse-ear cress)).